A 326-amino-acid polypeptide reads, in one-letter code: Thioredoxin reductase (326 aa).

40–47 (TGNNKGGQ) contributes to the FAD binding site. Cysteines 141 and 144 form a disulfide. Residue 291–300 (DVIDHVYKQA) participates in FAD binding.

Belongs to the class-II pyridine nucleotide-disulfide oxidoreductase family. Homodimer. Requires FAD as cofactor.

Its subcellular location is the cytoplasm. It catalyses the reaction [thioredoxin]-dithiol + NADP(+) = [thioredoxin]-disulfide + NADPH + H(+). In Buchnera aphidicola subsp. Baizongia pistaciae (strain Bp), this protein is Thioredoxin reductase (trxB).